We begin with the raw amino-acid sequence, 333 residues long: Ornithine carbamoyltransferase (333 aa).

Residues 56–59 (STRT), arginine 107, and 134–137 (HPTQ) each bind carbamoyl phosphate. L-ornithine-binding positions include asparagine 167, aspartate 231, and 235 to 236 (SM). Carbamoyl phosphate is bound by residues 273 to 274 (CL) and arginine 318.

It belongs to the aspartate/ornithine carbamoyltransferase superfamily. OTCase family.

It localises to the cytoplasm. The catalysed reaction is carbamoyl phosphate + L-ornithine = L-citrulline + phosphate + H(+). It participates in amino-acid degradation; L-arginine degradation via ADI pathway; carbamoyl phosphate from L-arginine: step 2/2. Its function is as follows. Reversibly catalyzes the transfer of the carbamoyl group from carbamoyl phosphate (CP) to the N(epsilon) atom of ornithine (ORN) to produce L-citrulline. The chain is Ornithine carbamoyltransferase from Clostridium botulinum (strain Langeland / NCTC 10281 / Type F).